Consider the following 210-residue polypeptide: MTTLETLKWDGKKSGKVSLDLAVAKKTSSADLIHRAVLRQLANKRQGTASTLTRSEVRGGGRKPYKQKGTGRARQGSIRTPLRPGGGIIFGPKPRSYNLDMNRKERRLALRTALMSRVSDIKAVEDFGSTLKQPKTSDIINGLARLGIQKTEKVLVILDSPSDIIKKSINNIEKVKLIAADQLNVFDILNANKLVIGQSAIDKIQEVYAS.

Polar residues predominate over residues 44 to 54; that stretch reads KRQGTASTLTR. Positions 44 to 85 are disordered; the sequence is KRQGTASTLTRSEVRGGGRKPYKQKGTGRARQGSIRTPLRPG. The segment covering 60-71 has biased composition (basic residues); sequence GGRKPYKQKGTG.

The protein belongs to the universal ribosomal protein uL4 family. Part of the 50S ribosomal subunit.

Functionally, one of the primary rRNA binding proteins, this protein initially binds near the 5'-end of the 23S rRNA. It is important during the early stages of 50S assembly. It makes multiple contacts with different domains of the 23S rRNA in the assembled 50S subunit and ribosome. Its function is as follows. Forms part of the polypeptide exit tunnel. The protein is Large ribosomal subunit protein uL4 of Prochlorococcus marinus (strain MIT 9301).